The chain runs to 831 residues: Periplasmic nitrate reductase (831 aa).

The tat-type signal signal peptide spans 1-29; the sequence is MTLSRRDFIKQTAVAATASVAGVTLPAGA. A 4Fe-4S Mo/W bis-MGD-type domain is found at 41-97; it reads LKWSKAPCRFCGTGCGVTVAVRDNKVVATNGDPQAEVNKGLNCVKGYFLSKIMYGQD. Cys-48, Cys-51, Cys-55, and Cys-83 together coordinate [4Fe-4S] cluster. Mo-bis(molybdopterin guanine dinucleotide)-binding positions include Lys-85, Gln-152, Asn-177, Cys-181, 214–221, 245–249, 264–266, Met-375, Gln-379, Asn-485, 511–512, Lys-534, Asp-561, and 721–730; these read WGSNMAEM, STFTH, QTD, SD, and TGRVLEHWHS. Trp-797 lines the substrate pocket. 2 residues coordinate Mo-bis(molybdopterin guanine dinucleotide): Asn-805 and Lys-822.

The protein belongs to the prokaryotic molybdopterin-containing oxidoreductase family. NasA/NapA/NarB subfamily. As to quaternary structure, component of the periplasmic nitrate reductase NapAB complex composed of NapA and NapB. The cofactor is [4Fe-4S] cluster. Requires Mo-bis(molybdopterin guanine dinucleotide) as cofactor. In terms of processing, predicted to be exported by the Tat system. The position of the signal peptide cleavage has not been experimentally proven.

The protein localises to the periplasm. It carries out the reaction 2 Fe(II)-[cytochrome] + nitrate + 2 H(+) = 2 Fe(III)-[cytochrome] + nitrite + H2O. In terms of biological role, catalytic subunit of the periplasmic nitrate reductase complex NapAB. Receives electrons from NapB and catalyzes the reduction of nitrate to nitrite. This Cupriavidus taiwanensis (strain DSM 17343 / BCRC 17206 / CCUG 44338 / CIP 107171 / LMG 19424 / R1) (Ralstonia taiwanensis (strain LMG 19424)) protein is Periplasmic nitrate reductase.